A 703-amino-acid chain; its full sequence is MARELRMLLLWGRRLRAPALAAACGGKPVLCPWRPPAQSWGPPRSLASSFHVGRPFSSQAAEDQAEAGPLHSVISSLEAVQGSATKHEFQAETKKLLDIVARSLYSEKEVFIRELISNASDALEKLRHKLVSEGQALPDMEIHLQTDADRGTITIQDTGVGMSREELVSNLGTIARSGSKAFLDALQNQAEAGSKIIGQFGVGFYSAFMVADRVEVYSRSVDAGSLGYRWLSDGSGVFEVAEASGVRTGTKIIIHLKADSREFASEARVRDVVTKYSNFVSFPLYLNGRRMNTLQAIWMMDPKDVGEGQHEEFYRYVAQAHDRPRYTLHYRTDAPLSIRSIFYVPDAKPSMFDVSRELGSSVSLYSRKVLIQTKATNILPTWLRFVRGVVDSEDIPLNLSRELLQESALIRKLQGVLQQRLIKFFTDQSKKDAEKYARFFEDYGLFVREGIVTTAEQEVKEDIAKLLRYESSALPAGQLTSLSDYASRMQAGTRNIYYLCAPNRHLAEHSPYYEAMKRKNTEVLFCYEQFDELTLLHLREFDKKKLISVETDIVVDHYKEEKFEDGAPAGDCLSEKETEDLMAWMRNALGSRITDVKVTLRLDTHPAMITVLEMGAARHFLRMRQLAKTQEERAQLLQPTLEINPRHVLIKKLSQLRDSEPDLAQLLVDQIYENAMITAGLIDDPRPMVGRLNQLLVKALERH.

The N-terminal 56 residues, 1–56 (MARELRMLLLWGRRLRAPALAAACGGKPVLCPWRPPAQSWGPPRSLASSFHVGRPF), are a transit peptide targeting the mitochondrion. Residues asparagine 118 and aspartate 157 each coordinate ATP. Serine 169 is subject to Phosphoserine. An ATP-binding site is contributed by asparagine 170. A Phosphothreonine modification is found at threonine 173. Residues phenylalanine 204 and arginine 401 each coordinate ATP. N6-acetyllysine is present on residues lysine 423, lysine 430, and lysine 465. The residue at position 493 (threonine 493) is a Phosphothreonine.

It belongs to the heat shock protein 90 family. Binds to the intracellular domain of tumor necrosis factor type 1 receptor. Binds to RB1. Interacts with SRC. Interacts with SDHA.

The protein resides in the mitochondrion. Its subcellular location is the mitochondrion inner membrane. It localises to the mitochondrion matrix. Chaperone that expresses an ATPase activity. Involved in maintaining mitochondrial function and polarization, downstream of PINK1 and mitochondrial complex I. Is a negative regulator of mitochondrial respiration able to modulate the balance between oxidative phosphorylation and aerobic glycolysis. The impact of TRAP1 on mitochondrial respiration is probably mediated by modulation of mitochondrial SRC and inhibition of SDHA. The polypeptide is Heat shock protein 75 kDa, mitochondrial (TRAP1) (Bos taurus (Bovine)).